Consider the following 102-residue polypeptide: Citrate lyase acyl carrier protein (102 aa).

Residue serine 14 is modified to O-(phosphoribosyl dephospho-coenzyme A)serine.

Belongs to the CitD family. Oligomer with a subunit composition of (alpha,beta,gamma)6.

It localises to the cytoplasm. Functionally, covalent carrier of the coenzyme of citrate lyase. In Streptococcus pyogenes serotype M18 (strain MGAS8232), this protein is Citrate lyase acyl carrier protein.